A 7524-amino-acid polypeptide reads, in one-letter code: Mucin-19 (7524 aa).

The signal sequence occupies residues 1–20 (MKLILLYLAVVLCFVGKGAA). A disordered region spans residues 20-47 (ARSPTTTRTPTPSTSEKASHVPEATPTY). A compositionally biased stretch (low complexity) spans 21 to 34 (RSPTTTRTPTPSTS). The 171-residue stretch at 55-225 (GEATMWGKDK…VCEDGVQYCD (171 aa)) folds into the VWFD 1 domain. A disulfide bridge connects residues C79 and C224. Residues 298-353 (CPGKHIYKECGPSNPPTCSNVAPFQDSECVSGCTCPEGYLLDDIGEKGKCVLKEKC) enclose the TIL domain. VWFD domains follow at residues 392–568 (GICK…EGSP) and 851–1025 (STCH…QECS). 6 cysteine pairs are disulfide-bonded: C394-C529, C434-C442, C853-C989, C875-C1024, C884-C986, and C900-C907. The span at 1244 to 1261 (AAATRASSSTSGSVETSV) shows a compositional bias: low complexity. Disordered regions lie at residues 1244 to 7217 (AAAT…SSLA) and 7249 to 7297 (SVIK…CPDS). Positions 1262–1289 (PATTSTSKAQAHITTASSTETSALNSTA) are enriched in polar residues. 2 stretches are compositionally biased toward low complexity: residues 1320–7099 (PAVS…AGSG) and 7112–7217 (STSG…SSLA). Repeat copies occupy residues 1321–1483 (AVST…TTGP), 1484–1646 (AVST…TTGP), 1647–1809 (AVST…TTGP), 1810–1972 (AVST…TTGP), 1973–2135 (AVST…TTGP), 2136–2298 (AVST…TTGP), 2299–2461 (AVST…TTGP), 2462–2624 (AVST…TTGP), 2625–2787 (AVST…TTGP), 2788–2950 (AVST…TTGP), 2951–3113 (AVST…TTGP), 3114–3276 (AVST…TTGP), 3277–3439 (AVST…TTGP), 3440–3602 (AVST…TTGP), 3603–3765 (AVST…TTGP), 3766–3928 (AVST…TTGP), 3929–4091 (AVST…TTGP), 4092–4254 (AVST…TTGP), 4255–4417 (AVST…TTGP), 4418–4580 (AVST…TTGP), 4581–4743 (AVST…TTGP), 4744–4906 (AVST…TTGP), 4907–5069 (AVST…TTGP), 5070–5232 (AVST…TTGP), 5233–5395 (AVST…TTGP), 5396–5558 (AVST…TTGP), 5559–5721 (AVST…TTGP), 5722–5884 (AVST…TTGP), 5885–6047 (AVST…TTGP), 6048–6210 (AVST…TTGP), 6211–6373 (AVST…TTGP), 6374–6536 (AVST…TTGP), 6537–6699 (AVST…TTGP), 6700–6862 (AVST…TTGP), 6863–7025 (AVST…TTGP), and 7026–7188 (AVST…TTGP). The tract at residues 1321–7188 (AVSTTSAGST…AETAGSTTGP (5868 aa)) is approximate repeats. Polar residues predominate over residues 7261-7291 (AKSNETTGRTTSMPASTSVAPGVTTSPNISQ). VWFC domains lie at 7302 to 7368 (PVCH…GHCE) and 7370 to 7432 (RTCL…YKCK). Cystine bridges form between C7435–C7482, C7449–C7496, C7458–C7512, and C7462–C7514. The CTCK domain maps to 7435–7519 (CRTTPVNVTV…TTCSCRDQCE (85 aa)).

As to expression, specifically expressed in sublingual salivary glands. Expressed by mucous cells of the submandibular gland and submucosal gland of the trachea. Expression is altered in sld (sublingual gland differentiation arrest) mutants.

The protein localises to the secreted. In terms of biological role, may function in ocular mucus homeostasis. In Mus musculus (Mouse), this protein is Mucin-19 (Muc19).